A 108-amino-acid chain; its full sequence is Large ribosomal subunit protein bL21 (108 aa).

It belongs to the bacterial ribosomal protein bL21 family. In terms of assembly, part of the 50S ribosomal subunit. Contacts protein L20.

Its function is as follows. This protein binds to 23S rRNA in the presence of protein L20. This Buchnera aphidicola subsp. Acyrthosiphon pisum (strain 5A) protein is Large ribosomal subunit protein bL21.